The following is a 204-amino-acid chain: UPF0637 protein SAB0972c (204 aa).

The protein belongs to the UPF0637 family.

The chain is UPF0637 protein SAB0972c from Staphylococcus aureus (strain bovine RF122 / ET3-1).